A 394-amino-acid polypeptide reads, in one-letter code: Probable purine permease 8 (394 aa).

Helical transmembrane passes span 45 to 65 (WLRI…STIL), 77 to 97 (TWMG…FRFF), 113 to 133 (FSSF…VSAN), 139 to 159 (VGLL…QLAF), 172 to 192 (FTPF…LLVV), 208 to 228 (VIGI…LSLV), 247 to 267 (LVAY…FASG), 289 to 309 (TLAS…GLIF), 315 to 335 (FSNS…VIVF), and 344 to 364 (IFSI…HYLD). Residues 373-394 (TSPVGDPHLLPAEEGHTNIHSV) are disordered. A compositionally biased stretch (basic and acidic residues) spans 383 to 394 (PAEEGHTNIHSV).

The protein belongs to the purine permeases (TC 2.A.7.14) family.

The protein localises to the membrane. This chain is Probable purine permease 8 (PUP8), found in Arabidopsis thaliana (Mouse-ear cress).